The chain runs to 258 residues: Isoprenyl transferase (258 aa).

D38 is a catalytic residue. D38 serves as a coordination point for Mg(2+). Substrate contacts are provided by residues 39-42 (GNGR), W43, R51, H55, and 83-85 (STE). N86 functions as the Proton acceptor in the catalytic mechanism. Residues W87, R89, R206, and 212 to 214 (RIS) contribute to the substrate site. E225 lines the Mg(2+) pocket.

The protein belongs to the UPP synthase family. In terms of assembly, homodimer. Requires Mg(2+) as cofactor.

Catalyzes the condensation of isopentenyl diphosphate (IPP) with allylic pyrophosphates generating different type of terpenoids. This Bacillus cereus (strain ATCC 10987 / NRS 248) protein is Isoprenyl transferase.